The following is an 887-amino-acid chain: Phosphatidylinositol 3-kinase catalytic subunit type 3 (887 aa).

A C2 PI3K-type domain is found at 35–184 (YKAVLEDPML…LAKLTKAHRQ (150 aa)). Residues 149 to 170 (VEADGSEPTKTPGRTSSTLSED) form a disordered region. Positions 156–170 (PTKTPGRTSSTLSED) are enriched in polar residues. Threonine 163 bears the Phosphothreonine; by AMPK mark. Position 165 is a phosphoserine; by AMPK (serine 165). Phosphoserine occurs at positions 244, 261, and 282. In terms of domain architecture, PIK helical spans 283-520 (DHDLKPNAAT…PKTHEMYLNV (238 aa)). A disordered region spans residues 447–467 (TSPLPSVSSPPPASKTKEVPD). Residues 605 to 871 (IPETATLFKS…LIDESVHALF (267 aa)) form the PI3K/PI4K catalytic domain. Residues 611–617 (LFKSALM) form a G-loop region. A catalytic loop region spans residues 740–748 (GVGDRHLDN). An activation loop region spans residues 759–780 (HIDFGYILGRDPKPLPPPMKLN).

The protein belongs to the PI3/PI4-kinase family. Component of the PI3K (PI3KC3/PI3K-III/class III phosphatidylinositol 3-kinase) complex the core of which is composed of the catalytic subunit PIK3C3, the regulatory subunit PIK3R4 and BECN1 associating with additional regulatory/auxiliary subunits to form alternative complex forms. Alternative complex forms containing a fourth regulatory subunit in a mutually exclusive manner are: the PI3K complex I (PI3KC3-C1) containing ATG14, and the PI3K complex II (PI3KC3-C2) containing UVRAG. PI3KC3-C1 displays a V-shaped architecture with PIK3R4 serving as a bridge between PIK3C3 and the ATG14:BECN1 subcomplex. Both, PI3KC3-C1 and PI3KC3-C2, can associate with further regulatory subunits such as RUBCN, SH3GLB1/Bif-1 and AMBRA1. PI3KC3-C1 probably associates with PIK3CB. Interacts with RAB7A in the presence of PIK3R4. Interacts with AMBRA1. Interacts with BECN1P1/BECN2. Interacts with SLAMF1. May be a component of a complex composed of RAB5A (in GDP-bound form), DYN2 and PIK3C3. Interacts with NCKAP1L. Interacts with ATG14; this interaction is increased in the absence of TMEM39A. Interacts with STEEP1; the interaction is STING1-dependent and required for trafficking of STING1 from the endoplasmic reticulum. Interacts with YWHAG. Interacts with ARMC3. Mn(2+) is required as a cofactor. Ubiquitinated via 'Lys-29'- and 'Lys-48'-linked ubiquitination by UBE3C, promoting its degradation. Deubiquitination by ZRANB1/TRABID promotes its stabilization, leading to autophagosome maturation. In terms of tissue distribution, ubiquitously expressed, with a highest expression in skeletal muscle.

The protein localises to the midbody. It localises to the late endosome. Its subcellular location is the cytoplasmic vesicle. The protein resides in the autophagosome. The enzyme catalyses a 1,2-diacyl-sn-glycero-3-phospho-(1D-myo-inositol) + ATP = a 1,2-diacyl-sn-glycero-3-phospho-(1D-myo-inositol-3-phosphate) + ADP + H(+). In terms of biological role, catalytic subunit of the PI3K complex that mediates formation of phosphatidylinositol 3-phosphate; different complex forms are believed to play a role in multiple membrane trafficking pathways: PI3KC3-C1 is involved in initiation of autophagosomes and PI3KC3-C2 in maturation of autophagosomes and endocytosis. As part of PI3KC3-C1, promotes endoplasmic reticulum membrane curvature formation prior to vesicle budding. Involved in regulation of degradative endocytic trafficking and required for the abscission step in cytokinesis, probably in the context of PI3KC3-C2. Involved in the transport of lysosomal enzyme precursors to lysosomes. Required for transport from early to late endosomes. Functionally, (Microbial infection) Kinase activity is required for SARS coronavirus-2/SARS-CoV-2 replication. In Homo sapiens (Human), this protein is Phosphatidylinositol 3-kinase catalytic subunit type 3.